A 212-amino-acid polypeptide reads, in one-letter code: Thymidylate kinase (212 aa).

10-17 (GIDGCGKT) provides a ligand contact to ATP.

Belongs to the thymidylate kinase family.

It catalyses the reaction dTMP + ATP = dTDP + ADP. Phosphorylation of dTMP to form dTDP in both de novo and salvage pathways of dTTP synthesis. This chain is Thymidylate kinase, found in Prochlorococcus marinus (strain MIT 9301).